The chain runs to 334 residues: Holliday junction branch migration complex subunit RuvB (334 aa).

Residues 4–184 form a large ATPase domain (RuvB-L) region; sequence ADRLISAEPI…FGIVQRLEFY (181 aa). ATP contacts are provided by residues Ile23, Arg24, Gly65, Lys68, Thr69, Thr70, 131 to 133, Arg174, Tyr184, and Arg221; that span reads EDY. Position 69 (Thr69) interacts with Mg(2+). The small ATPAse domain (RuvB-S) stretch occupies residues 185–255; it reads QVADLQHIVS…VAMQALDMLN (71 aa). The head domain (RuvB-H) stretch occupies residues 258-334; the sequence is AEGFDYMDRK…YKHFGMVREE (77 aa). 3 residues coordinate DNA: Arg294, Arg313, and Arg318.

The protein belongs to the RuvB family. In terms of assembly, homohexamer. Forms an RuvA(8)-RuvB(12)-Holliday junction (HJ) complex. HJ DNA is sandwiched between 2 RuvA tetramers; dsDNA enters through RuvA and exits via RuvB. An RuvB hexamer assembles on each DNA strand where it exits the tetramer. Each RuvB hexamer is contacted by two RuvA subunits (via domain III) on 2 adjacent RuvB subunits; this complex drives branch migration. In the full resolvosome a probable DNA-RuvA(4)-RuvB(12)-RuvC(2) complex forms which resolves the HJ.

The protein localises to the cytoplasm. It carries out the reaction ATP + H2O = ADP + phosphate + H(+). In terms of biological role, the RuvA-RuvB-RuvC complex processes Holliday junction (HJ) DNA during genetic recombination and DNA repair, while the RuvA-RuvB complex plays an important role in the rescue of blocked DNA replication forks via replication fork reversal (RFR). RuvA specifically binds to HJ cruciform DNA, conferring on it an open structure. The RuvB hexamer acts as an ATP-dependent pump, pulling dsDNA into and through the RuvAB complex. RuvB forms 2 homohexamers on either side of HJ DNA bound by 1 or 2 RuvA tetramers; 4 subunits per hexamer contact DNA at a time. Coordinated motions by a converter formed by DNA-disengaged RuvB subunits stimulates ATP hydrolysis and nucleotide exchange. Immobilization of the converter enables RuvB to convert the ATP-contained energy into a lever motion, pulling 2 nucleotides of DNA out of the RuvA tetramer per ATP hydrolyzed, thus driving DNA branch migration. The RuvB motors rotate together with the DNA substrate, which together with the progressing nucleotide cycle form the mechanistic basis for DNA recombination by continuous HJ branch migration. Branch migration allows RuvC to scan DNA until it finds its consensus sequence, where it cleaves and resolves cruciform DNA. In Serratia proteamaculans (strain 568), this protein is Holliday junction branch migration complex subunit RuvB.